The following is a 338-amino-acid chain: L-serine dehydratase (338 aa).

Lysine 39 bears the N6-(pyridoxal phosphate)lysine mark.

It belongs to the serine/threonine dehydratase family. Pyridoxal 5'-phosphate is required as a cofactor.

It is found in the cytoplasm. It carries out the reaction L-serine = pyruvate + NH4(+). It functions in the pathway carbohydrate biosynthesis; gluconeogenesis. The chain is L-serine dehydratase (SDL1) from Saccharomyces cerevisiae (strain YJM789) (Baker's yeast).